A 420-amino-acid chain; its full sequence is UDP-N-acetylglucosamine 1-carboxyvinyltransferase (420 aa).

22–23 is a phosphoenolpyruvate binding site; that stretch reads KN. Arginine 91 provides a ligand contact to UDP-N-acetyl-alpha-D-glucosamine. Cysteine 115 serves as the catalytic Proton donor. Residue cysteine 115 is modified to 2-(S-cysteinyl)pyruvic acid O-phosphothioketal. Residues 120 to 124, 160 to 163, aspartate 305, and isoleucine 327 each bind UDP-N-acetyl-alpha-D-glucosamine; these read RPVDL and KVSV.

It belongs to the EPSP synthase family. MurA subfamily.

It localises to the cytoplasm. The enzyme catalyses phosphoenolpyruvate + UDP-N-acetyl-alpha-D-glucosamine = UDP-N-acetyl-3-O-(1-carboxyvinyl)-alpha-D-glucosamine + phosphate. It functions in the pathway cell wall biogenesis; peptidoglycan biosynthesis. Its function is as follows. Cell wall formation. Adds enolpyruvyl to UDP-N-acetylglucosamine. The chain is UDP-N-acetylglucosamine 1-carboxyvinyltransferase from Erwinia tasmaniensis (strain DSM 17950 / CFBP 7177 / CIP 109463 / NCPPB 4357 / Et1/99).